The sequence spans 575 residues: Serine/threonine-protein phosphatase 2A regulatory subunit B'' subunit beta (575 aa).

Residues 41–131 (APGRDQPTPG…SQSIPTFYFP (91 aa)) form a disordered region. The EF-hand domain maps to 388-423 (KTPTSIEYWFRCMDLDGDGALSMFELEYFYEEQCRR). Ca(2+) is bound by residues Asp401, Asp403, Asp405, and Glu412.

In terms of assembly, PP2A consists of a common heterodimeric core enzyme, composed of a 36 kDa catalytic subunit (subunit C) and a 65 kDa constant regulatory subunit (PR65 or subunit A), that associates with a variety of regulatory subunits. Proteins that associate with the core dimer include three families of regulatory subunits B (the R2/B/PR55/B55, R3/B''/PR72/PR130/PR59 and R5/B'/B56 families), the 48 kDa variable regulatory subunit, viral proteins, and cell signaling molecules. Interacts with N-terminal region of CDC6. Interacts with NOD2.

It localises to the nucleus. In terms of biological role, the B regulatory subunit might modulate substrate selectivity and catalytic activity, and might also direct the localization of the catalytic enzyme to a particular subcellular compartment. The polypeptide is Serine/threonine-protein phosphatase 2A regulatory subunit B'' subunit beta (PPP2R3B) (Homo sapiens (Human)).